The primary structure comprises 168 residues: G/U mismatch-specific DNA glycosylase (168 aa).

This sequence belongs to the uracil-DNA glycosylase (UDG) superfamily. TDG/mug family. As to quaternary structure, binds DNA as a monomer.

It is found in the cytoplasm. It catalyses the reaction Specifically hydrolyzes mismatched double-stranded DNA and polynucleotides, releasing free uracil.. Excises ethenocytosine and uracil, which can arise by alkylation or deamination of cytosine, respectively, from the corresponding mispairs with guanine in ds-DNA. It is capable of hydrolyzing the carbon-nitrogen bond between the sugar-phosphate backbone of the DNA and the mispaired base. The complementary strand guanine functions in substrate recognition. Required for DNA damage lesion repair in stationary-phase cells. The polypeptide is G/U mismatch-specific DNA glycosylase (Salmonella gallinarum (strain 287/91 / NCTC 13346)).